The primary structure comprises 176 residues: Ribosome maturation factor RimM (176 aa).

The 74-residue stretch at 100 to 173 (EGEFHLLDLV…WLRLTPPPGL (74 aa)) folds into the PRC barrel domain.

This sequence belongs to the RimM family. In terms of assembly, binds ribosomal protein uS19.

The protein resides in the cytoplasm. An accessory protein needed during the final step in the assembly of 30S ribosomal subunit, possibly for assembly of the head region. Essential for efficient processing of 16S rRNA. May be needed both before and after RbfA during the maturation of 16S rRNA. It has affinity for free ribosomal 30S subunits but not for 70S ribosomes. The chain is Ribosome maturation factor RimM from Prochlorococcus marinus (strain MIT 9303).